Consider the following 318-residue polypeptide: Transaldolase (318 aa).

The Schiff-base intermediate with substrate role is filled by K132.

The protein belongs to the transaldolase family. Type 1 subfamily. As to quaternary structure, homodimer.

It localises to the cytoplasm. It carries out the reaction D-sedoheptulose 7-phosphate + D-glyceraldehyde 3-phosphate = D-erythrose 4-phosphate + beta-D-fructose 6-phosphate. It participates in carbohydrate degradation; pentose phosphate pathway; D-glyceraldehyde 3-phosphate and beta-D-fructose 6-phosphate from D-ribose 5-phosphate and D-xylulose 5-phosphate (non-oxidative stage): step 2/3. Functionally, transaldolase is important for the balance of metabolites in the pentose-phosphate pathway. This chain is Transaldolase, found in Shewanella putrefaciens (strain CN-32 / ATCC BAA-453).